The primary structure comprises 662 residues: MNLTEDYMVFEDVAIHFSQEEWGILNDVQRHLHSDVMLENFALLSSVGCWHGAKDEEAPSKQCVSVGVSQVTTLKPALSTQKAQPCETCSSLLKDILHLAEHDGTHPKRTAKLYLHQKEHLREKLTRSDEGRPSFVNDSVHLAKRNLTCMQGGKDFTGDSDLQQQALHSGWKPHRDTHGVEAFQSGQNNYSCTQCGKDFCHQHTLFEHQKIHTEERPYECSECGKLFRYNSDLIKHQRNHTGERPYKCSECGKAFSLKYNVVQHQKIHTGERPYECSECGKAFLRKSHLLQHQRIHTRPRPYVCSECGKAFLTQAHLVGHQKIHTGERPYGCNECGKYFMYSSALIRHQKVHTGERPFYCCECGKFFMDSCTLIIHQRVHTGEKPYECNECGKFFRYRSTLIRHQKVHTGEKPYECSECGKFFMDTSTLIIHQRVHTGEKPYECNKCGKFFRYCFTLNRHQRVHSGERPYECSECGKFFVDSCTLKSHQRVHTGERPFECSICGKSFRCRSTLDTHQRIHTGERPYECSECGKFFRHNSNHIRHRRNHFGERSFECTECGRVFSQNSHLIRHQKVHTRERTYKCSKCGKFFMDSSTLISHERVHTGEKPYECSECGKVFRYNSSLIKHRRIHTGERPYQCSECGRVFNQNSHLIQHQKVHTR.

The region spanning 8–101 is the KRAB domain; it reads MVFEDVAIHF…LLKDILHLAE (94 aa). 16 C2H2-type zinc fingers span residues 190 to 212, 218 to 240, 246 to 268, 274 to 296, 302 to 324, 358 to 380, 386 to 408, 414 to 436, 442 to 464, 470 to 492, 498 to 520, 526 to 548, 554 to 576, 582 to 604, 610 to 632, and 638 to 660; these read YSCTQCGKDFCHQHTLFEHQKIH, YECSECGKLFRYNSDLIKHQRNH, YKCSECGKAFSLKYNVVQHQKIH, YECSECGKAFLRKSHLLQHQRIH, YVCSECGKAFLTQAHLVGHQKIH, FYCCECGKFFMDSCTLIIHQRVH, YECNECGKFFRYRSTLIRHQKVH, YECSECGKFFMDTSTLIIHQRVH, YECNKCGKFFRYCFTLNRHQRVH, YECSECGKFFVDSCTLKSHQRVH, FECSICGKSFRCRSTLDTHQRIH, YECSECGKFFRHNSNHIRHRRNH, FECTECGRVFSQNSHLIRHQKVH, YKCSKCGKFFMDSSTLISHERVH, YECSECGKVFRYNSSLIKHRRIH, and YQCSECGRVFNQNSHLIQHQKVH.

This sequence belongs to the krueppel C2H2-type zinc-finger protein family.

It is found in the nucleus. May be involved in transcriptional regulation. This chain is Zinc finger protein 17 (ZNF17), found in Homo sapiens (Human).